A 266-amino-acid polypeptide reads, in one-letter code: Hemin import ATP-binding protein HmuV (266 aa).

The ABC transporter domain occupies 12-248 (LEASHLHYHV…ETLTQWYQAD (237 aa)). 44–51 (GPNGAGKS) serves as a coordination point for ATP.

The protein belongs to the ABC transporter superfamily. Heme (hemin) importer (TC 3.A.1.14.5) family. In terms of assembly, the complex is composed of two ATP-binding proteins (HmuV), two transmembrane proteins (HmuU) and a solute-binding protein (HmuT).

Its subcellular location is the cell inner membrane. Part of the ABC transporter complex HmuTUV involved in hemin import. Responsible for energy coupling to the transport system. The polypeptide is Hemin import ATP-binding protein HmuV (Yersinia pestis bv. Antiqua (strain Antiqua)).